An 873-amino-acid polypeptide reads, in one-letter code: Leucine--tRNA ligase (873 aa).

A 'HIGH' region motif is present at residues 47–57 (PYPSGKLHMGH). A 'KMSKS' region motif is present at residues 636-640 (KMSKS). Residue lysine 639 participates in ATP binding.

The protein belongs to the class-I aminoacyl-tRNA synthetase family.

It localises to the cytoplasm. It catalyses the reaction tRNA(Leu) + L-leucine + ATP = L-leucyl-tRNA(Leu) + AMP + diphosphate. In Acinetobacter baylyi (strain ATCC 33305 / BD413 / ADP1), this protein is Leucine--tRNA ligase.